Here is a 459-residue protein sequence, read N- to C-terminus: Exodeoxyribonuclease 7 large subunit (459 aa).

It belongs to the XseA family. Heterooligomer composed of large and small subunits.

It localises to the cytoplasm. The catalysed reaction is Exonucleolytic cleavage in either 5'- to 3'- or 3'- to 5'-direction to yield nucleoside 5'-phosphates.. Bidirectionally degrades single-stranded DNA into large acid-insoluble oligonucleotides, which are then degraded further into small acid-soluble oligonucleotides. The chain is Exodeoxyribonuclease 7 large subunit from Pseudomonas syringae pv. tomato (strain ATCC BAA-871 / DC3000).